The chain runs to 475 residues: Exodeoxyribonuclease I (475 aa).

Residues 13–192 (FHDYETFGTH…AMADVYATIA (180 aa)) enclose the Exonuclease domain. Mg(2+) is bound by residues Asp-15 and Glu-17. Residues Glu-17 and Arg-165 each contribute to the substrate site. Mg(2+) is bound at residue Asp-186. Residues 202–355 (PRLFDYLFTH…KVVAIFAEAE (154 aa)) enclose the ExoI SH3-like domain. One can recognise an ExoI C-terminal domain in the interval 358 to 475 (TPSDNVDAQL…ALWQYAEEIV (118 aa)).

Monomer. Interacts with ssb (via C-terminus); this interaction stimulates the exonuclease activity by recruiting the enzyme to its substrate. The cofactor is Mg(2+).

The catalysed reaction is Exonucleolytic cleavage in the 3'- to 5'-direction to yield nucleoside 5'-phosphates.. Its activity is regulated as follows. Inhibited by 10 mM EDTA. Its function is as follows. Degrades single-stranded DNA (ssDNA) in a highly processive manner. Also functions as a DNA deoxyribophosphodiesterase that releases deoxyribose-phosphate moieties following the cleavage of DNA at an apurinic/apyrimidinic (AP) site by either an AP endonuclease or AP lyase. This is Exodeoxyribonuclease I (sbcB) from Escherichia coli (strain K12).